We begin with the raw amino-acid sequence, 260 residues long: UPF0246 protein BceJ2315_22780 (260 aa).

The protein belongs to the UPF0246 family.

The polypeptide is UPF0246 protein BceJ2315_22780 (Burkholderia cenocepacia (strain ATCC BAA-245 / DSM 16553 / LMG 16656 / NCTC 13227 / J2315 / CF5610) (Burkholderia cepacia (strain J2315))).